The following is a 187-amino-acid chain: Protein Flattop (187 aa).

The disordered stretch occupies residues 97–187 (THSGHGIHTH…TPQLEREEPQ (91 aa)). The span at 122–131 (EGDQTCNAPT) shows a compositional bias: polar residues. Basic and acidic residues predominate over residues 169 to 187 (KRREQSLEETPQLEREEPQ).

This sequence belongs to the Flattop family.

It is found in the cytoplasm. Its subcellular location is the cytoskeleton. It localises to the cilium basal body. The protein localises to the cell projection. The protein resides in the cilium. It is found in the apical cell membrane. Its subcellular location is the cilium axoneme. Its function is as follows. Microtubule inner protein (MIP) part of the dynein-decorated doublet microtubules (DMTs) in cilia axoneme. Acts as a regulator of cilium basal body docking and positioning in mono- and multiciliated cells. Regulates basal body docking and cilia formation in multiciliated lung cells. Regulates kinocilium positioning and stereocilia bundle morphogenesis in the inner ear. The chain is Protein Flattop from Salmo salar (Atlantic salmon).